A 215-amino-acid polypeptide reads, in one-letter code: Small ribosomal subunit protein uS3 (215 aa).

Residues 38-106 (LRAFLKKKLF…EVLIDIQEIR (69 aa)) enclose the KH type-2 domain.

This sequence belongs to the universal ribosomal protein uS3 family. In terms of assembly, part of the 30S ribosomal subunit. Forms a tight complex with proteins S10 and S14.

Functionally, binds the lower part of the 30S subunit head. Binds mRNA in the 70S ribosome, positioning it for translation. This Desulforapulum autotrophicum (strain ATCC 43914 / DSM 3382 / VKM B-1955 / HRM2) (Desulfobacterium autotrophicum) protein is Small ribosomal subunit protein uS3.